We begin with the raw amino-acid sequence, 586 residues long: Phosphatase and actin regulator 1 (586 aa).

Residues 62-83 (RRRSKFATLGRLFKPWKWRKKK) carry the Nuclear localization signal motif. The RPEL 1 repeat unit spans residues 92–117 (AALERKISMRQSREELIKRGVLKEMY). The disordered stretch occupies residues 373–414 (ECEDDKENVPHETSYDDSSCLYSRDEEEDDDDDDDDEDDDSS). Acidic residues predominate over residues 397–413 (DEEEDDDDDDDDEDDDS). 3 RPEL repeats span residues 428-453 (DSLA…PMQT), 466-491 (TKLT…KPRN), and 504-529 (RRLT…ISFS).

Belongs to the phosphatase and actin regulator family. Interacts (via RPEL repeats) with ACTA1.

The protein localises to the cytoplasm. Its subcellular location is the synapse. It localises to the nucleus. In terms of biological role, binds actin monomers (G actin) and plays a role in the reorganization of the actin cytoskeleton and in formation of actin stress fibers. The sequence is that of Phosphatase and actin regulator 1 (phactr1) from Xenopus laevis (African clawed frog).